Consider the following 131-residue polypeptide: Type IV wide pilus major component PilA4 (131 aa).

Residues 1–6 (MRNAKG) constitute a propeptide, leader sequence. At Phe-7 the chain carries N-methylphenylalanine. Residues 7-27 (FTLIELLIVIAIIAILAAVLI) traverse the membrane as a helical segment. Cys-95 and Cys-130 form a disulfide bridge.

As to quaternary structure, interacts with PilQ. In terms of processing, found in three forms of 14-kDa, 18-kDa and a glycosylated 23-kDa form. Both narrow and wide pili are glycosylated.

The protein resides in the cell inner membrane. It localises to the cell outer membrane. Its subcellular location is the periplasm. In terms of biological role, plays an essential role in the assembly of two types of T4P pili: a wide and a narrow that participate in natural transformation and twitching motility. Major component of the wide pilus that is essential for natural transformation working as a DNA translocator structure that spans the inner and outer membranes. In addition, participates in the assembly of the narrow pilus composed of the PilA5 subunit that is required for twitching motility. The polypeptide is Type IV wide pilus major component PilA4 (pilA4) (Thermus thermophilus (strain ATCC BAA-163 / DSM 7039 / HB27)).